Reading from the N-terminus, the 136-residue chain is Small ribosomal subunit protein uS11 (136 aa).

Disordered stretches follow at residues 1–20 (MAQRRSSQTTKKVKRKNVTN) and 115–136 (VTPQAHNGTRPPKRVLKREKAR). Residues 125–136 (PPKRVLKREKAR) show a composition bias toward basic residues.

The protein belongs to the universal ribosomal protein uS11 family. In terms of assembly, part of the 30S ribosomal subunit. Interacts with proteins S7 and S18. Binds to IF-3.

Its function is as follows. Located on the platform of the 30S subunit, it bridges several disparate RNA helices of the 16S rRNA. Forms part of the Shine-Dalgarno cleft in the 70S ribosome. The protein is Small ribosomal subunit protein uS11 of Mycoplasmopsis pulmonis (strain UAB CTIP) (Mycoplasma pulmonis).